Here is a 520-residue protein sequence, read N- to C-terminus: GMP synthase [glutamine-hydrolyzing] (520 aa).

Positions 9-202 (KILILDFGSQ…VRKICGCSGQ (194 aa)) constitute a Glutamine amidotransferase type-1 domain. The Nucleophile role is filled by C86. Catalysis depends on residues H176 and E178. The GMPS ATP-PPase domain occupies 203-395 (WTPGHIIDDA…LGLPHQMVWR (193 aa)). 230–236 (SGGVDSS) contacts ATP.

In terms of assembly, homodimer.

It carries out the reaction XMP + L-glutamine + ATP + H2O = GMP + L-glutamate + AMP + diphosphate + 2 H(+). It functions in the pathway purine metabolism; GMP biosynthesis; GMP from XMP (L-Gln route): step 1/1. Functionally, catalyzes the synthesis of GMP from XMP. The sequence is that of GMP synthase [glutamine-hydrolyzing] from Geobacter metallireducens (strain ATCC 53774 / DSM 7210 / GS-15).